Reading from the N-terminus, the 155-residue chain is Large ribosomal subunit protein eL24 (155 aa).

Residues 94–129 are compositionally biased toward basic and acidic residues; sequence RSLKPEVRKAQRDEKKKADKEKKKADKAARKSEKAK. Residues 94–155 are disordered; that stretch reads RSLKPEVRKA…AFQKVAATSR (62 aa).

Belongs to the eukaryotic ribosomal protein eL24 family.

This Kluyveromyces lactis (strain ATCC 8585 / CBS 2359 / DSM 70799 / NBRC 1267 / NRRL Y-1140 / WM37) (Yeast) protein is Large ribosomal subunit protein eL24 (RPL24).